A 259-amino-acid polypeptide reads, in one-letter code: Undecaprenyl-diphosphatase 3 (259 aa).

8 helical membrane-spanning segments follow: residues M1 to I21, A39 to Y59, F71 to L91, I99 to M119, I133 to I153, A174 to V194, S208 to I228, and F239 to F259.

This sequence belongs to the UppP family.

It is found in the cell membrane. It catalyses the reaction di-trans,octa-cis-undecaprenyl diphosphate + H2O = di-trans,octa-cis-undecaprenyl phosphate + phosphate + H(+). Functionally, catalyzes the dephosphorylation of undecaprenyl diphosphate (UPP). Confers resistance to bacitracin. The polypeptide is Undecaprenyl-diphosphatase 3 (Bacillus cereus (strain ATCC 14579 / DSM 31 / CCUG 7414 / JCM 2152 / NBRC 15305 / NCIMB 9373 / NCTC 2599 / NRRL B-3711)).